We begin with the raw amino-acid sequence, 383 residues long: MFPERGTDEEEVLEELRRKTREDLTFDSGKILGSMCTYPHPFAVKIITEFIDRNLGDPGLHIGSRKVEEEAVEMLSNLLGLKKGYGHIVSGGTEANILAVRAFRNLAGVEKPELILPKSAHFSFIKAGEMLGVKLIWAELNEDYTVNVRDVEEKITDNTIGIVGIAGTTGLGVVDDIPALSDLALDYGLPLHVDAAFGGFVIPFAKALGYDIPDFDFRLKGVKSITIDPHKMGMVPIPAGGIIFRERKYIDAISILAPYLAGGRIWQATITGTRPGANALAVWAMIKHLGFEGYKEIVRKAMELSQWFAGELKKIPGVYLIREPVLNIVSFGTENLERVEEELKRRGWGISAHRGYIRIVMMPHVRREHLEEFLRDLEEIVRG.

The residue at position 231 (Lys-231) is an N6-(pyridoxal phosphate)lysine.

The protein belongs to the group II decarboxylase family. MfnA subfamily. Pyridoxal 5'-phosphate serves as cofactor.

The enzyme catalyses L-aspartate + H(+) = beta-alanine + CO2. It participates in cofactor biosynthesis; coenzyme A biosynthesis. Its function is as follows. Catalyzes the decarboxylation of L-aspartate to produce beta-alanine. The polypeptide is Probable L-aspartate decarboxylase (Thermococcus gammatolerans (strain DSM 15229 / JCM 11827 / EJ3)).